The following is a 394-amino-acid chain: GDP-mannose transporter (394 aa).

At 1–55 the chain is on the cytoplasmic side; that stretch reads MADKKNEDFVVRMPDNGTVEKEPFLARSPPARARTGSGGGFGDSFSLARVANNPP. Residues 56–76 form a helical membrane-spanning segment; the sequence is AAILAYCLSSISMTVVNKYVV. Residues 77–80 are Lumenal-facing; that stretch reads SGSE. The chain crosses the membrane as a helical span at residues 81-101; the sequence is WNLNFFYLAVQAIVCIIAILF. Residues 102-121 lie on the Cytoplasmic side of the membrane; that stretch reads CKQIGIITNLAPFDNVKAKK. Residues 122–144 traverse the membrane as a helical segment; sequence WFPVSLLLVGMIYTSTKALQFLS. Residues 145–149 are Lumenal-facing; it reads VPVYT. The helical transmembrane segment at 150–167 threads the bilayer; it reads IFKNLTIIAIAYGEVLWF. Residues 168–173 lie on the Cytoplasmic side of the membrane; the sequence is GGSVSP. A helical transmembrane segment spans residues 174-198; it reads LALVSFGLMVLSSVVAAWADIQSAI. The Lumenal portion of the chain corresponds to 199-213; the sequence is HGGSHPSEASTAIST. The chain crosses the membrane as a helical span at residues 214 to 234; that stretch reads LNAGYAWMGMNVFCSAAYLLG. The Cytoplasmic portion of the chain corresponds to 235-246; sequence MRKVIHKMNFKD. Residues 247 to 267 form a helical membrane-spanning segment; the sequence is WDSMFYNNLLTIPVLIVCSLI. The Lumenal portion of the chain corresponds to 268–287; that stretch reads AEDWSAANLARNFPIESRNA. The helical transmembrane segment at 288–308 threads the bilayer; sequence LFIGMIYSGLGAIFISYCSAW. Topologically, residues 309–316 are cytoplasmic; sequence CIRVTTST. Residues 317 to 339 form a helical membrane-spanning segment; the sequence is TYSMVGALNKLPIAISGLVFFSA. Residues 340–342 lie on the Lumenal side of the membrane; it reads PVT. Residues 343 to 362 form a helical membrane-spanning segment; sequence FGSVSAIVIGFISGIVYAWA. Residues 363–394 are Cytoplasmic-facing; that stretch reads KARQSSQAKSALPTQQPVMSASSQSNKDASNS. The segment at 371–394 is disordered; sequence KSALPTQQPVMSASSQSNKDASNS. The span at 374-394 shows a compositional bias: polar residues; sequence LPTQQPVMSASSQSNKDASNS.

This sequence belongs to the TPT transporter family. SLC35D subfamily. In terms of assembly, homooligomer.

It localises to the golgi apparatus membrane. The protein localises to the cytoplasmic vesicle membrane. The protein resides in the endoplasmic reticulum membrane. Functionally, involved in the import of GDP-mannose from the cytoplasm into the Golgi lumen. The sequence is that of GDP-mannose transporter (VRG4) from Pyricularia oryzae (strain 70-15 / ATCC MYA-4617 / FGSC 8958) (Rice blast fungus).